Consider the following 178-residue polypeptide: Large ribosomal subunit protein uL6 (178 aa).

This sequence belongs to the universal ribosomal protein uL6 family. In terms of assembly, part of the 50S ribosomal subunit.

Its function is as follows. This protein binds to the 23S rRNA, and is important in its secondary structure. It is located near the subunit interface in the base of the L7/L12 stalk, and near the tRNA binding site of the peptidyltransferase center. This Helicobacter pylori (strain G27) protein is Large ribosomal subunit protein uL6.